A 352-amino-acid polypeptide reads, in one-letter code: Small ribosomal subunit biogenesis GTPase RsgA (352 aa).

A compositionally biased stretch (basic residues) spans 1 to 11; sequence MTKRKLSKGQQ. A disordered region spans residues 1-35; that stretch reads MTKRKLSKGQQRRVQENHKKRLQSKEKKNHVELDD. Positions 13–33 are enriched in basic and acidic residues; it reads RVQENHKKRLQSKEKKNHVEL. The CP-type G domain occupies 114–276; the sequence is YYDGIKPIAA…VIDSPGVREF (163 aa). Residues 162–165 and 216–224 each bind GTP; these read NKVD and GQSGVGKSS. C300, C305, H307, and C313 together coordinate Zn(2+).

It belongs to the TRAFAC class YlqF/YawG GTPase family. RsgA subfamily. In terms of assembly, monomer. Associates with 30S ribosomal subunit, binds 16S rRNA. Zn(2+) serves as cofactor.

Its subcellular location is the cytoplasm. One of several proteins that assist in the late maturation steps of the functional core of the 30S ribosomal subunit. Helps release RbfA from mature subunits. May play a role in the assembly of ribosomal proteins into the subunit. Circularly permuted GTPase that catalyzes slow GTP hydrolysis, GTPase activity is stimulated by the 30S ribosomal subunit. The sequence is that of Small ribosomal subunit biogenesis GTPase RsgA from Proteus mirabilis (strain HI4320).